The following is a 990-amino-acid chain: Glycine dehydrogenase (decarboxylating) (990 aa).

Lys726 bears the N6-(pyridoxal phosphate)lysine mark.

This sequence belongs to the GcvP family. The glycine cleavage system is composed of four proteins: P, T, L and H. The cofactor is pyridoxal 5'-phosphate.

The catalysed reaction is N(6)-[(R)-lipoyl]-L-lysyl-[glycine-cleavage complex H protein] + glycine + H(+) = N(6)-[(R)-S(8)-aminomethyldihydrolipoyl]-L-lysyl-[glycine-cleavage complex H protein] + CO2. Functionally, the glycine cleavage system catalyzes the degradation of glycine. The P protein binds the alpha-amino group of glycine through its pyridoxal phosphate cofactor; CO(2) is released and the remaining methylamine moiety is then transferred to the lipoamide cofactor of the H protein. This chain is Glycine dehydrogenase (decarboxylating), found in Rhodopseudomonas palustris (strain ATCC BAA-98 / CGA009).